A 1043-amino-acid chain; its full sequence is MTTTNTSIFGPRVNNSKFNNNNNNNNNNNNNNNNTSNNNNSNIIKPPQVVQETQQQQQAQQQPLQTNEEVCVICKSKNVQVCTGCLMVYYCGAEHQNIDWPNHKSLCSGLNRRNDLLDRAEKSKDLRKKLQSDIFSSGNRVSNSNNNSSIYSNSTGNINNNNNSNNNNIKGGIGGGAVTNSSTVMAPERKSIAISNIKHLQQQIQQTQQTQQQPPPTTTSIPTQPNSSSFNKPTAKKPGTSFKSSSSGDNTPINQSPSSSSSSLVSSTNNNNNNNNNNNNNNNINSNSNNMSGSSGGIKALQNQLQNSINNKPSNTTSNSPNPSPPSSTFVPNSNNNSNSNSSSGSGKSNLNISLKSSTSSSPVTSTYLYNNNNSNSNSNSNNSSTETTTCISSNSNNSSNIENSDNTNEENGMKNIKNKLSQINFGAPPPSFKKPTSKVIENEDNNNSNNDGTLKQSSSSDSIYFNNNNNNNNNNNNNNNNNNNNNNNNNNNNNNNNNNNNNNNNNNNNNNNNNNNNNNSNNNNFDINNSNNIINNKQSTCSSIDGLSYNNNNSGSSLKNSVPPTTSNTPPRKRSSGGSSSSNNSNIGSNGNRIGFIKEHKKNQSLPDSFVDFYQSNKNQSNGYESLLDNDDNKTRGYGSFNENDDSHEECDDDDDDDDGGGQDGDDGLDGTEFKRGRNRPTGLRTNNNAVFEWESGTIEYSTNNTSQHKKLGVGSRGGNSFSKDTQSQSTNSTTTDDHQTGSILNSNSGSSDDLQQQQTQTQQQQSQLSAGVGRIAGKFRMIGGDIKKKAAIVGTLTKNKVSEVTSKSKSSTSVNNNNNDEVDHNENNNNNNNNINNNNNNNNNNIENIIFGIPLEEAVKKSATLHPLIPDVIYKSIEYIREKGIQEEGIFRLSGSANAITLLKNEFDRGVNVDLYQQLDQHVVSGILKLYLRQIPETLFTQDFGEELEELRVGGNSSDAISKRIAGSIILLQRLPESNRCILHYLCNLLNAISFEPSTKMGTVNLAIVFAPTLGVSVEVMTCLISYYDEIFGIQTYNYNS.

The segment at 1–44 (MTTTNTSIFGPRVNNSKFNNNNNNNNNNNNNNNNTSNNNNSNII) is disordered. Residues 14 to 44 (NNSKFNNNNNNNNNNNNNNNNTSNNNNSNII) are compositionally biased toward low complexity. 8 residues coordinate Zn(2+): cysteine 71, cysteine 74, cysteine 82, cysteine 85, cysteine 91, histidine 95, histidine 103, and cysteine 107. The segment at 71–107 (CVICKSKNVQVCTGCLMVYYCGAEHQNIDWPNHKSLC) adopts an MYND-type; atypical zinc-finger fold. Disordered stretches follow at residues 137–163 (SGNR…NNNN), 199–532 (HLQQ…NNSN), 546–594 (DGLS…NGNR), 614–690 (FYQS…TNNN), 706–772 (NTSQ…QLSA), and 801–842 (NKVS…NNNN). Residues 201 to 225 (QQQIQQTQQTQQQPPPTTTSIPTQP) show a composition bias toward low complexity. The segment covering 241–253 (SFKSSSSGDNTPI) has biased composition (polar residues). Composition is skewed to low complexity over residues 254–293 (NQSP…NMSG) and 307–411 (NSIN…TNEE). The segment covering 453–466 (GTLKQSSSSDSIYF) has biased composition (polar residues). Low complexity-rich tracts occupy residues 467–532 (NNNN…NNSN) and 547–594 (GLSY…NGNR). The span at 615–625 (YQSNKNQSNGY) shows a compositional bias: polar residues. Over residues 644–671 (ENDDSHEECDDDDDDDDGGGQDGDDGLD) the composition is skewed to acidic residues. Composition is skewed to low complexity over residues 726–736 (DTQSQSTNSTT), 752–771 (SSDD…SQLS), 801–821 (NKVS…NNNN), and 829–842 (NNNN…NNNN). Residues 825-852 (DHNENNNNNNNNINNNNNNNNNNIENII) are a coiled coil. The Rho-GAP domain maps to 855-1043 (IPLEEAVKKS…FGIQTYNYNS (189 aa)).

It is found in the cytoplasm. Its function is as follows. Rho GTPase-activating protein involved in the signal transduction pathway. The protein is Rho GTPase-activating protein gacZ (gacZ) of Dictyostelium discoideum (Social amoeba).